Reading from the N-terminus, the 73-residue chain is MLSTSTLIGLTYAALAVLYLLVLPFLFLVYVDKRWNYSGAWEKVLMFFLVLFFFPGMVLVAPFMTFRPKPRSL.

2 helical membrane passes run Leu7–Phe27 and Val44–Met64.

Belongs to the complex I NdhL subunit family. As to quaternary structure, NDH-1 can be composed of about 15 different subunits; different subcomplexes with different compositions have been identified which probably have different functions.

Its subcellular location is the cellular thylakoid membrane. The enzyme catalyses a plastoquinone + NADH + (n+1) H(+)(in) = a plastoquinol + NAD(+) + n H(+)(out). The catalysed reaction is a plastoquinone + NADPH + (n+1) H(+)(in) = a plastoquinol + NADP(+) + n H(+)(out). Functionally, NDH-1 shuttles electrons from an unknown electron donor, via FMN and iron-sulfur (Fe-S) centers, to quinones in the respiratory and/or the photosynthetic chain. The immediate electron acceptor for the enzyme in this species is believed to be plastoquinone. Couples the redox reaction to proton translocation, and thus conserves the redox energy in a proton gradient. Cyanobacterial NDH-1 also plays a role in inorganic carbon-concentration. The sequence is that of NAD(P)H-quinone oxidoreductase subunit L from Synechococcus sp. (strain JA-3-3Ab) (Cyanobacteria bacterium Yellowstone A-Prime).